The chain runs to 160 residues: Dihydrofolate reductase (160 aa).

The DHFR domain maps to 1–160 (MVKAIWAMDQ…KVAYYHKIAR (160 aa)). 5–7 (IWA) is a binding site for substrate. NADP(+)-binding positions include 6-7 (WA) and 14-19 (IGNGNS). Glu-27 and Arg-32 together coordinate substrate. Position 43-46 (43-46 (GSAT)) interacts with NADP(+). Arg-57 contacts substrate. Residues 62 to 65 (LTRN) and 101 to 106 (CGGAQV) each bind NADP(+). Substrate is bound at residue Ser-120.

It belongs to the dihydrofolate reductase family.

It carries out the reaction (6S)-5,6,7,8-tetrahydrofolate + NADP(+) = 7,8-dihydrofolate + NADPH + H(+). Its pathway is cofactor biosynthesis; tetrahydrofolate biosynthesis; 5,6,7,8-tetrahydrofolate from 7,8-dihydrofolate: step 1/1. Its function is as follows. Key enzyme in folate metabolism. Catalyzes an essential reaction for de novo glycine and purine synthesis, and for DNA precursor synthesis. This Mycoplasma pneumoniae (strain ATCC 29342 / M129 / Subtype 1) (Mycoplasmoides pneumoniae) protein is Dihydrofolate reductase (folA).